The chain runs to 202 residues: MNLAEGVQVVSFGILATMLIGTALGVVLATSIVYSAFLLGGVFISIAGMYLLLNGDFVAAAQVLVYVGAVNVLILFAIMLVNKRQDFTPYPSAGIRKVLTAIVSVGLFALLSTMVLATPWAYSTTPKVGDGSIIVIGEHFFSDFLLPFELASVLLLMAMVGAIILARREYLPEVTPSGLPQTVLTLPERPRELVGAGSETQE.

Transmembrane regions (helical) follow at residues V9–A29, I32–L52, A61–V81, V98–T118, and F144–I164.

The protein belongs to the complex I subunit 6 family.

The protein localises to the membrane. The catalysed reaction is a plastoquinone + NADH + (n+1) H(+)(in) = a plastoquinol + NAD(+) + n H(+)(out). It catalyses the reaction a plastoquinone + NADPH + (n+1) H(+)(in) = a plastoquinol + NADP(+) + n H(+)(out). Its function is as follows. NDH-1 shuttles electrons from NAD(P)H, via FMN and iron-sulfur (Fe-S) centers, to quinones in the respiratory chain. The immediate electron acceptor for the enzyme in this species is believed to be plastoquinone. Couples the redox reaction to proton translocation (for every two electrons transferred, four hydrogen ions are translocated across the cytoplasmic membrane), and thus conserves the redox energy in a proton gradient. The protein is NAD(P)H-quinone oxidoreductase chain 6 (ndhG) of Nostoc sp. (strain PCC 7120 / SAG 25.82 / UTEX 2576).